Reading from the N-terminus, the 321-residue chain is Transaldolase (321 aa).

Lys132 acts as the Schiff-base intermediate with substrate in catalysis.

This sequence belongs to the transaldolase family. Type 1 subfamily. In terms of assembly, homodimer.

The protein localises to the cytoplasm. The enzyme catalyses D-sedoheptulose 7-phosphate + D-glyceraldehyde 3-phosphate = D-erythrose 4-phosphate + beta-D-fructose 6-phosphate. Its pathway is carbohydrate degradation; pentose phosphate pathway; D-glyceraldehyde 3-phosphate and beta-D-fructose 6-phosphate from D-ribose 5-phosphate and D-xylulose 5-phosphate (non-oxidative stage): step 2/3. Functionally, transaldolase is important for the balance of metabolites in the pentose-phosphate pathway. This is Transaldolase from Rhizobium rhizogenes (strain K84 / ATCC BAA-868) (Agrobacterium radiobacter).